A 342-amino-acid chain; its full sequence is S-adenosylmethionine:tRNA ribosyltransferase-isomerase (342 aa).

Belongs to the QueA family. Monomer.

It localises to the cytoplasm. The catalysed reaction is 7-aminomethyl-7-carbaguanosine(34) in tRNA + S-adenosyl-L-methionine = epoxyqueuosine(34) in tRNA + adenine + L-methionine + 2 H(+). The protein operates within tRNA modification; tRNA-queuosine biosynthesis. Functionally, transfers and isomerizes the ribose moiety from AdoMet to the 7-aminomethyl group of 7-deazaguanine (preQ1-tRNA) to give epoxyqueuosine (oQ-tRNA). The sequence is that of S-adenosylmethionine:tRNA ribosyltransferase-isomerase from Bacillus pumilus (strain SAFR-032).